We begin with the raw amino-acid sequence, 473 residues long: 3-isopropylmalate dehydratase large subunit (473 aa).

Positions 351, 414, and 417 each coordinate [4Fe-4S] cluster.

The protein belongs to the aconitase/IPM isomerase family. LeuC type 1 subfamily. As to quaternary structure, heterodimer of LeuC and LeuD. It depends on [4Fe-4S] cluster as a cofactor.

The enzyme catalyses (2R,3S)-3-isopropylmalate = (2S)-2-isopropylmalate. It functions in the pathway amino-acid biosynthesis; L-leucine biosynthesis; L-leucine from 3-methyl-2-oxobutanoate: step 2/4. Its function is as follows. Catalyzes the isomerization between 2-isopropylmalate and 3-isopropylmalate, via the formation of 2-isopropylmaleate. This Acidovorax sp. (strain JS42) protein is 3-isopropylmalate dehydratase large subunit.